A 71-amino-acid chain; its full sequence is uncharacterized protein (71 aa).

The helical transmembrane segment at 12–34 (GYLSLTLVTLPVCSSLHCYFLWT) threads the bilayer.

The protein resides in the membrane. This is an uncharacterized protein from Dictyostelium discoideum (Social amoeba).